Reading from the N-terminus, the 132-residue chain is Small ribosomal subunit protein uS11 (132 aa).

The disordered stretch occupies residues 108–132 (GRIEDVTPVPHDSCRPKGGRRGRRV).

Belongs to the universal ribosomal protein uS11 family. Part of the 30S ribosomal subunit.

Functionally, located on the platform of the 30S subunit. The chain is Small ribosomal subunit protein uS11 from Methanoregula boonei (strain DSM 21154 / JCM 14090 / 6A8).